The primary structure comprises 428 residues: Something about silencing protein 10 (428 aa).

Residues 1-93 are disordered; sequence MDSDGDDYVM…NTMDWGSKRS (93 aa). Composition is skewed to acidic residues over residues 15–24 and 46–62; these read QEYDDEEREI and SDDDDDDDDDDEEEQQD. A phosphoserine mark is found at S152, S323, S324, and S337. Residues 317 to 386 form a disordered region; it reads GQQASVSSDD…LRNPRVKHRG (70 aa). The segment covering 324–336 has biased composition (acidic residues); sequence SDDDDNDDDDDAE. A compositionally biased stretch (acidic residues) spans 344 to 353; it reads EEAGEEEEEE. Positions 370-386 are enriched in basic residues; the sequence is TPHRKKELRNPRVKHRG.

Belongs to the SAS10 family.

The protein resides in the nucleus. In terms of biological role, essential for gene silencing: has a role in the structure of silenced chromatin. May be involved in gene regulation during development. Binds RNA. This chain is Something about silencing protein 10, found in Drosophila melanogaster (Fruit fly).